The chain runs to 521 residues: GMP synthase [glutamine-hydrolyzing] (521 aa).

The Glutamine amidotransferase type-1 domain occupies 5-197 (KILILDFGSQ…VLDICGAQPG (193 aa)). Cysteine 81 functions as the Nucleophile in the catalytic mechanism. Residues histidine 171 and glutamate 173 contribute to the active site. The GMPS ATP-PPase domain maps to 198 to 390 (WTMPNYIEEA…LGLPREMVYR (193 aa)). 225–231 (SGGVDSS) is a binding site for ATP.

As to quaternary structure, homodimer.

The catalysed reaction is XMP + L-glutamine + ATP + H2O = GMP + L-glutamate + AMP + diphosphate + 2 H(+). It participates in purine metabolism; GMP biosynthesis; GMP from XMP (L-Gln route): step 1/1. In terms of biological role, catalyzes the synthesis of GMP from XMP. This Neisseria meningitidis serogroup B (strain ATCC BAA-335 / MC58) protein is GMP synthase [glutamine-hydrolyzing] (guaA).